A 621-amino-acid polypeptide reads, in one-letter code: Membrane protein insertase YidC (621 aa).

A run of 6 helical transmembrane segments spans residues 1–21 (MDKNTLVGFALIGAVVIGFSI), 363–383 (GWGLSMGVVLLLMTIIVKVLV), 436–456 (MGGCLPMLIQMPVFMALFFFV), 486–506 (IPLLGNHLSLFCLLFSITNIL), 527–547 (LMMYIMPVMFIFIFNGYSSGL), and 549–569 (YYYFISGLIGILTMVILRKTT).

It belongs to the OXA1/ALB3/YidC family. Type 1 subfamily. Interacts with the Sec translocase complex via SecD. Specifically interacts with transmembrane segments of nascent integral membrane proteins during membrane integration.

It is found in the cell inner membrane. Its function is as follows. Required for the insertion and/or proper folding and/or complex formation of integral membrane proteins into the membrane. Involved in integration of membrane proteins that insert both dependently and independently of the Sec translocase complex, as well as at least some lipoproteins. Aids folding of multispanning membrane proteins. This chain is Membrane protein insertase YidC, found in Phocaeicola vulgatus (strain ATCC 8482 / DSM 1447 / JCM 5826 / CCUG 4940 / NBRC 14291 / NCTC 11154) (Bacteroides vulgatus).